The following is a 91-amino-acid chain: Putative septation protein SpoVG (91 aa).

Belongs to the SpoVG family.

Its function is as follows. Could be involved in septation. The polypeptide is Putative septation protein SpoVG (Caldanaerobacter subterraneus subsp. tengcongensis (strain DSM 15242 / JCM 11007 / NBRC 100824 / MB4) (Thermoanaerobacter tengcongensis)).